Reading from the N-terminus, the 86-residue chain is Electron transfer flavoprotein regulatory factor 1 (86 aa).

It belongs to the complex I LYR family.

The protein localises to the mitochondrion. Functionally, acts as a regulator of the electron transfer flavoprotein by promoting the removal of flavin from the ETF holoenzyme (composed of ETFA and ETFB). This is Electron transfer flavoprotein regulatory factor 1 from Taeniopygia guttata (Zebra finch).